The primary structure comprises 366 residues: MKGGSLSFLFVLLIATITSVICFSDGMLPNGDFELGPKPSDMKGTQVINKKAIPSWELSGFVEYIKSGQKQGDMLLVVPAGKFAIRLGNEASIKQRLNVTKGMYYSLTFSAARTCAQDERLNISVAPDSGVIPIQTVYSSSGWDLYAWAFQAESNVAEIVIHNPGEEEDPACGPLIDGVAIKALYPPRPTNKNILKNGGFEEGPYVLPNATTGVLVPPFIEDDHSPLPAWMVESLKAIKYVDVEHFSVPQGRRAVELVAGKESAIAQVARTVVGKTYVLSFAVGDANNACQGSMVVEAFAGKDTLKVPYESRGKGGFKRASLRFVAVSTRTRVMFYSTFYSMRSDDFSSLCGPVIDDVKLLSARKP.

The signal sequence occupies residues 1–22; that stretch reads MKGGSLSFLFVLLIATITSVIC. Asparagine 98, asparagine 122, and asparagine 209 each carry an N-linked (GlcNAc...) asparagine glycan.

In terms of assembly, interacts with PME3.

It is found in the secreted. The protein localises to the cell wall. In terms of biological role, together with BIIDXI, acts as a positive regulator of PME3 activity during several developmental processes, including seed germination and endosperm (testa) rupture at the micropyle, probably by modulating the pectin status in cell walls. In Arabidopsis thaliana (Mouse-ear cress), this protein is BIIDXI-like protein At5g11420.